We begin with the raw amino-acid sequence, 128 residues long: Small ribosomal subunit protein uS11 (128 aa).

This sequence belongs to the universal ribosomal protein uS11 family. As to quaternary structure, part of the 30S ribosomal subunit. Interacts with proteins S7 and S18. Binds to IF-3.

Functionally, located on the platform of the 30S subunit, it bridges several disparate RNA helices of the 16S rRNA. Forms part of the Shine-Dalgarno cleft in the 70S ribosome. In Phytoplasma australiense, this protein is Small ribosomal subunit protein uS11.